The primary structure comprises 256 residues: Spheroidene monooxygenase (256 aa).

The segment covering 1-23 (MTNELSNAAGASQQGPAASSFSA) has biased composition (low complexity). The disordered stretch occupies residues 1-26 (MTNELSNAAGASQQGPAASSFSADTP).

Belongs to the CrtA family. Heme is required as a cofactor.

It catalyses the reaction spheroidene + 4 reduced [2Fe-2S]-[ferredoxin] + 2 O2 + 4 H(+) = spheroiden-2-one + 4 oxidized [2Fe-2S]-[ferredoxin] + 3 H2O. The enzyme catalyses spirilloxanthin + 4 reduced [2Fe-2S]-[ferredoxin] + 2 O2 + 4 H(+) = 2-oxospirilloxanthin + 4 oxidized [2Fe-2S]-[ferredoxin] + 3 H2O. It carries out the reaction 2-oxospirilloxanthin + 4 reduced [2Fe-2S]-[ferredoxin] + 2 O2 + 4 H(+) = 2,2'-dioxospirilloxanthin + 4 oxidized [2Fe-2S]-[ferredoxin] + 3 H2O. The catalysed reaction is spheroidene + 2 reduced [2Fe-2S]-[ferredoxin] + O2 + 2 H(+) = 2-hydroxyspheroidene + 2 oxidized [2Fe-2S]-[ferredoxin] + H2O. It catalyses the reaction 2-hydroxyspheroidene + 2 reduced [2Fe-2S]-[ferredoxin] + O2 + 2 H(+) = 2,2-dihydroxyspheroidene + 2 oxidized [2Fe-2S]-[ferredoxin] + H2O. The enzyme catalyses 2,2-dihydroxyspheroidene = spheroiden-2-one + H2O. It carries out the reaction spirilloxanthin + 2 reduced [2Fe-2S]-[ferredoxin] + O2 + 2 H(+) = 2-hydroxyspirilloxanthin + 2 oxidized [2Fe-2S]-[ferredoxin] + H2O. The catalysed reaction is 2-hydroxyspirilloxanthin + 2 reduced [2Fe-2S]-[ferredoxin] + O2 + 2 H(+) = 2,2-dihydroxyspirilloxanthin + 2 oxidized [2Fe-2S]-[ferredoxin] + H2O. It catalyses the reaction 2,2-dihydroxyspirilloxanthin = 2-oxospirilloxanthin + H2O. The enzyme catalyses 2-oxospirilloxanthin + 2 reduced [2Fe-2S]-[ferredoxin] + O2 + 2 H(+) = 2'-hydroxy-2-oxospirilloxanthin + 2 oxidized [2Fe-2S]-[ferredoxin] + H2O. It carries out the reaction 2'-hydroxy-2-oxospirilloxanthin + 2 reduced [2Fe-2S]-[ferredoxin] + O2 + 2 H(+) = 2',2'-dihydroxy-2-oxospirilloxanthin + 2 oxidized [2Fe-2S]-[ferredoxin] + H2O. The catalysed reaction is 2',2'-dihydroxy-2-oxospirilloxanthin = 2,2'-dioxospirilloxanthin + H2O. The protein operates within carotenoid biosynthesis; spheroidene biosynthesis. It participates in carotenoid biosynthesis; spirilloxanthin biosynthesis. In terms of biological role, involved in the biosynthesis of the carotenoids spheroidene and spirilloxanthin. Catalyzes the introduction of one keto group at the C-2 position of spheroidene and two keto groups at the C-2 and C-2' positions of spirilloxanthin. This chain is Spheroidene monooxygenase, found in Rubrivivax gelatinosus (Rhodocyclus gelatinosus).